The primary structure comprises 886 residues: Alanine--tRNA ligase (886 aa).

Zn(2+)-binding residues include His564, His568, Cys676, and His680.

This sequence belongs to the class-II aminoacyl-tRNA synthetase family. It depends on Zn(2+) as a cofactor.

It localises to the cytoplasm. The enzyme catalyses tRNA(Ala) + L-alanine + ATP = L-alanyl-tRNA(Ala) + AMP + diphosphate. Functionally, catalyzes the attachment of alanine to tRNA(Ala) in a two-step reaction: alanine is first activated by ATP to form Ala-AMP and then transferred to the acceptor end of tRNA(Ala). Also edits incorrectly charged Ser-tRNA(Ala) and Gly-tRNA(Ala) via its editing domain. The protein is Alanine--tRNA ligase of Bartonella bacilliformis (strain ATCC 35685 / KC583 / Herrer 020/F12,63).